The chain runs to 826 residues: BLOC-2 complex member HPS5 homolog (826 aa).

3 WD repeats span residues Lys22–Ile61, Asn63–Pro102, and Asp110–Leu149. Over residues Ala422 to Arg446 the composition is skewed to polar residues. Residues Ala422 to Ala447 are disordered.

It belongs to the HPS5 family. As to expression, expressed in eye pigment granules.

Has a role in the biogenesis of eye pigment granules. Eye pigment granules are specialized forms of late endosomes or lysosomes. Biogenesis of pigment granules in the eye requires molecular components required for protein delivery to lysosomes. This is BLOC-2 complex member HPS5 homolog from Drosophila melanogaster (Fruit fly).